The primary structure comprises 403 residues: Argininosuccinate synthase (403 aa).

10-18 (AYSGGLDTS) provides a ligand contact to ATP. 2 residues coordinate L-citrulline: Tyr-88 and Ser-93. Gly-118 contributes to the ATP binding site. L-aspartate contacts are provided by Thr-120, Asn-124, and Asp-125. Asn-124 serves as a coordination point for L-citrulline. The L-citrulline site is built by Arg-128, Ser-177, Ser-186, Glu-263, and Tyr-275.

The protein belongs to the argininosuccinate synthase family. Type 1 subfamily. As to quaternary structure, homotetramer.

The protein localises to the cytoplasm. The catalysed reaction is L-citrulline + L-aspartate + ATP = 2-(N(omega)-L-arginino)succinate + AMP + diphosphate + H(+). It participates in amino-acid biosynthesis; L-arginine biosynthesis; L-arginine from L-ornithine and carbamoyl phosphate: step 2/3. The sequence is that of Argininosuccinate synthase from Clostridium perfringens (strain ATCC 13124 / DSM 756 / JCM 1290 / NCIMB 6125 / NCTC 8237 / Type A).